Here is a 250-residue protein sequence, read N- to C-terminus: V-type proton ATPase subunit D (250 aa).

It belongs to the V-ATPase D subunit family. In terms of assembly, V-ATPase is a heteromultimeric enzyme made up of two complexes: the ATP-hydrolytic V1 complex and the proton translocation V0 complex. The V1 complex consists of three catalytic AB heterodimers that form a heterohexamer, three peripheral stalks each consisting of EG heterodimers, one central rotor including subunits D and F, and the regulatory subunits C and H. The proton translocation complex V0 consists of the proton transport subunit a, a ring of proteolipid subunits c9c'', rotary subunit d, subunits e and f, and two accessory subunits ATP6AP1/Ac45 and ATP6AP2/PRR.

Its function is as follows. Subunit of the V1 complex of vacuolar(H+)-ATPase (V-ATPase), a multisubunit enzyme composed of a peripheral complex (V1) that hydrolyzes ATP and a membrane integral complex (V0) that translocates protons. V-ATPase is responsible for acidifying and maintaining the pH of intracellular compartments and in some cell types, is targeted to the plasma membrane, where it is responsible for acidifying the extracellular environment. This chain is V-type proton ATPase subunit D (VATPD), found in Suberites domuncula (Sponge).